A 417-amino-acid polypeptide reads, in one-letter code: C4-dicarboxylate transport protein (417 aa).

Transmembrane regions (helical) follow at residues 4-26 (IYVQ…PQIG), 41-60 (KLVI…ARMG), 72-94 (ALIY…GRLI), 137-159 (FIGA…TGFA), 180-202 (LFFG…AMGF), 217-239 (ALVA…GIAW), 285-307 (VVGL…YMTL), and 347-369 (FITL…AILV).

It belongs to the dicarboxylate/amino acid:cation symporter (DAACS) (TC 2.A.23) family.

The protein localises to the cell inner membrane. In terms of biological role, responsible for the transport of dicarboxylates such as succinate, fumarate, and malate from the periplasm across the membrane. In Caulobacter vibrioides (strain ATCC 19089 / CIP 103742 / CB 15) (Caulobacter crescentus), this protein is C4-dicarboxylate transport protein.